A 140-amino-acid chain; its full sequence is Putative pre-16S rRNA nuclease (140 aa).

Belongs to the YqgF nuclease family.

Its subcellular location is the cytoplasm. Could be a nuclease involved in processing of the 5'-end of pre-16S rRNA. This Halothermothrix orenii (strain H 168 / OCM 544 / DSM 9562) protein is Putative pre-16S rRNA nuclease.